Consider the following 754-residue polypeptide: Transcription factor MBP1 (754 aa).

One can recognise an HTH APSES-type domain in the interval 6–112; sequence IYSAKYSGVD…FTQQEGSASP (107 aa). Residues 37-58 constitute a DNA-binding region (H-T-H motif); it reads ATHILKAAKFPKAKRTRILEKE. Disordered regions lie at residues 105–215 and 239–301; these read QQEG…FGRS and LDIE…MQTP. The segment covering 147 to 162 has biased composition (low complexity); that stretch reads SSQQQQPVSQQQQQQP. Polar residues-rich tracts occupy residues 177-187 and 203-215; these read ATVTLQRSQSE and TKLPSLQPQFGRS. Over residues 257–272 the composition is skewed to basic and acidic residues; the sequence is TKHEDNTHLMNTKDEP. A compositionally biased stretch (low complexity) spans 273–289; it reads VSSSSSLPSSPSEFSQS. Polar residues predominate over residues 290 to 301; it reads VAFGSRSNMQTP. ANK repeat units follow at residues 375-404 and 493-522; these read EHHTAFHWACAMGTLPIVEALLKAGSSIRS and DGNSPLHYAATNKDDQFYQLLLQNGALTTV.

MBF contains SWI6 and MBP1.

It localises to the nucleus. In terms of biological role, binds to MCB elements (Mlu I cell cycle box) found in the promoter of most DNA synthesis genes. Transcriptional activation by MBF has an important role in the transition from G1 to S phase. It may have a dual role in that it behaves as an activator of transcription at the G1-S boundary and as a repressor during other stages of the cell cycle. In Kluyveromyces lactis (strain ATCC 8585 / CBS 2359 / DSM 70799 / NBRC 1267 / NRRL Y-1140 / WM37) (Yeast), this protein is Transcription factor MBP1 (MBP1).